We begin with the raw amino-acid sequence, 877 residues long: Alanine--tRNA ligase (877 aa).

4 residues coordinate Zn(2+): histidine 556, histidine 560, cysteine 657, and histidine 661.

This sequence belongs to the class-II aminoacyl-tRNA synthetase family. Zn(2+) serves as cofactor.

The protein localises to the cytoplasm. It catalyses the reaction tRNA(Ala) + L-alanine + ATP = L-alanyl-tRNA(Ala) + AMP + diphosphate. Its function is as follows. Catalyzes the attachment of alanine to tRNA(Ala) in a two-step reaction: alanine is first activated by ATP to form Ala-AMP and then transferred to the acceptor end of tRNA(Ala). Also edits incorrectly charged Ser-tRNA(Ala) and Gly-tRNA(Ala) via its editing domain. In Wolbachia pipientis wMel, this protein is Alanine--tRNA ligase.